The sequence spans 414 residues: Serine hydroxymethyltransferase (414 aa).

(6S)-5,6,7,8-tetrahydrofolate-binding positions include Leu-117 and 121 to 123 (GHL). At Lys-226 the chain carries N6-(pyridoxal phosphate)lysine.

The protein belongs to the SHMT family. As to quaternary structure, homodimer. The cofactor is pyridoxal 5'-phosphate.

The protein localises to the cytoplasm. The catalysed reaction is (6R)-5,10-methylene-5,6,7,8-tetrahydrofolate + glycine + H2O = (6S)-5,6,7,8-tetrahydrofolate + L-serine. Its pathway is one-carbon metabolism; tetrahydrofolate interconversion. It participates in amino-acid biosynthesis; glycine biosynthesis; glycine from L-serine: step 1/1. Catalyzes the reversible interconversion of serine and glycine with tetrahydrofolate (THF) serving as the one-carbon carrier. This reaction serves as the major source of one-carbon groups required for the biosynthesis of purines, thymidylate, methionine, and other important biomolecules. Also exhibits THF-independent aldolase activity toward beta-hydroxyamino acids, producing glycine and aldehydes, via a retro-aldol mechanism. The sequence is that of Serine hydroxymethyltransferase from Dictyoglomus turgidum (strain DSM 6724 / Z-1310).